The chain runs to 230 residues: Type II restriction enzyme NlaIII (230 aa).

The enzyme catalyses Endonucleolytic cleavage of DNA to give specific double-stranded fragments with terminal 5'-phosphates.. A P subtype restriction enzyme that recognizes the double-stranded sequence 5'-CATG-3' and cleaves after G-4. The protein is Type II restriction enzyme NlaIII (nlaIIIR) of Neisseria lactamica.